The primary structure comprises 607 residues: Frizzled and smoothened-like protein J (607 aa).

Positions 1–26 (MVSNKNLLPIIYIFFIILYFGDVAKS) are cleaved as a signal peptide. Residues 27–247 (QYFPLDKGAT…QWRNIYRLSD (221 aa)) are Extracellular-facing. The region spanning 32 to 182 (DKGATCQKYR…LSYTNTCENT (151 aa)) is the FZ domain. Intrachain disulfides connect cysteine 37–cysteine 108, cysteine 50–cysteine 101, and cysteine 127–cysteine 179. Residues asparagine 63, asparagine 133, asparagine 155, asparagine 164, asparagine 190, and asparagine 222 are each glycosylated (N-linked (GlcNAc...) asparagine). A helical membrane pass occupies residues 248-268 (VLSILSCILTLFLVITLGIIN). Over 269 to 276 (PKVSRFDK) the chain is Cytoplasmic. A helical membrane pass occupies residues 277–297 (INVMLLSSIFLQAFSGALMTF). An N-linked (GlcNAc...) asparagine glycan is attached at asparagine 298. Residues 298–330 (NGTENTLCPEDGRFASYIDRMCVATGFLLHGSS) lie on the Extracellular side of the membrane. Residues 331–351 (LLVVQWWCVLSFEVWFTIFQV) traverse the membrane as a helical segment. Topologically, residues 352 to 358 (GKKQKDR) are cytoplasmic. A helical transmembrane segment spans residues 359–379 (FIYYLVASLIIAWIPPIVSIS). The Extracellular portion of the chain corresponds to 380–401 (KNEYSGGPANPFCWLTTFNYRR). Residues 402 to 422 (FAFWLPMGIFLCLGGVFLILL) form a helical membrane-spanning segment. Residues 423–451 (MREIYVIVSGNVQSTKESRFKVLKMEAKP) are Cytoplasmic-facing. A helical transmembrane segment spans residues 452–472 (IISLIMYFSCLLYLFIYDQWI). Residues 473-508 (NNHMHVYTDSIPSYALCLLTSTSTNDCLLKAPDITG) are Extracellular-facing. The chain crosses the membrane as a helical span at residues 509-529 (LGYFIYSIRVFGVYAFIIYGI). At 530–607 (SKKTLQIWKY…VELDSNSDAL (78 aa)) the chain is on the cytoplasmic side. Residues 532–537 (KTLQIW) carry the Lys-Thr-X-X-X-Trp motif, mediates interaction with the PDZ domain of Dvl family members motif. A compositionally biased stretch (low complexity) spans 559-575 (TAKSSNSNNSSTTNNIS). The segment at 559–607 (TAKSSNSNNSSTTNNISVKASSNMEYETRQENENGDSQSVELDSNSDAL) is disordered. Residues 593 to 607 (GDSQSVELDSNSDAL) show a composition bias toward polar residues.

It belongs to the G-protein coupled receptor Fz/Smo family.

Its subcellular location is the membrane. The chain is Frizzled and smoothened-like protein J (fslJ-1) from Dictyostelium discoideum (Social amoeba).